A 447-amino-acid polypeptide reads, in one-letter code: Exodeoxyribonuclease 7 large subunit (447 aa).

Belongs to the XseA family. Heterooligomer composed of large and small subunits.

It localises to the cytoplasm. The enzyme catalyses Exonucleolytic cleavage in either 5'- to 3'- or 3'- to 5'-direction to yield nucleoside 5'-phosphates.. In terms of biological role, bidirectionally degrades single-stranded DNA into large acid-insoluble oligonucleotides, which are then degraded further into small acid-soluble oligonucleotides. This is Exodeoxyribonuclease 7 large subunit from Lactobacillus helveticus (strain DPC 4571).